The following is a 310-amino-acid chain: Methionyl-tRNA formyltransferase (310 aa).

111–114 (SILP) contacts (6S)-5,6,7,8-tetrahydrofolate.

The protein belongs to the Fmt family.

The catalysed reaction is L-methionyl-tRNA(fMet) + (6R)-10-formyltetrahydrofolate = N-formyl-L-methionyl-tRNA(fMet) + (6S)-5,6,7,8-tetrahydrofolate + H(+). Attaches a formyl group to the free amino group of methionyl-tRNA(fMet). The formyl group appears to play a dual role in the initiator identity of N-formylmethionyl-tRNA by promoting its recognition by IF2 and preventing the misappropriation of this tRNA by the elongation apparatus. In Finegoldia magna (strain ATCC 29328 / DSM 20472 / WAL 2508) (Peptostreptococcus magnus), this protein is Methionyl-tRNA formyltransferase.